A 124-amino-acid polypeptide reads, in one-letter code: uncharacterized protein (124 aa).

The chain crosses the membrane as a helical span at residues 13–33; that stretch reads IIFMALYFVITGIVIRLIGYS.

It localises to the membrane. This is an uncharacterized protein from Bacillus anthracis.